We begin with the raw amino-acid sequence, 113 residues long: Ribonuclease P protein component (113 aa).

A compositionally biased stretch (basic residues) spans 1–10 (MLPTRHRMRT). Residues 1–23 (MLPTRHRMRTSAHFSTTVRSGAR) are disordered.

It belongs to the RnpA family. Consists of a catalytic RNA component (M1 or rnpB) and a protein subunit.

It carries out the reaction Endonucleolytic cleavage of RNA, removing 5'-extranucleotides from tRNA precursor.. RNaseP catalyzes the removal of the 5'-leader sequence from pre-tRNA to produce the mature 5'-terminus. It can also cleave other RNA substrates such as 4.5S RNA. The protein component plays an auxiliary but essential role in vivo by binding to the 5'-leader sequence and broadening the substrate specificity of the ribozyme. This is Ribonuclease P protein component from Kocuria rhizophila (strain ATCC 9341 / DSM 348 / NBRC 103217 / DC2201).